A 468-amino-acid chain; its full sequence is Nuclear pore complex protein Nup50 (468 aa).

Over residues 1–16 the composition is skewed to basic and acidic residues; the sequence is MAKRNAEKELTDRNWD. The interval 1-26 is disordered; the sequence is MAKRNAEKELTDRNWDQEDEAEEVGT. Ala2 carries the N-acetylalanine modification. Position 8 is an N6-acetyllysine (Lys8). Ser52 carries the post-translational modification Phosphoserine. The stretch at 76–77 is repeat 1; that stretch reads FG. The 5 X 2 AA repeats of F-G stretch occupies residues 76–304; it reads FGSGAGGKPL…FSPGNSSLFG (229 aa). Lys83 bears the N6-acetyllysine mark. The stretch at 113–114 is repeat 2; sequence FG. 2 disordered regions span residues 122–148 and 201–224; these read TTLV…LASS and HGNS…SPSL. The residue at position 127 (Lys127) is an N6-acetyllysine. The segment covering 137–148 has biased composition (low complexity); that stretch reads SQQPSSSGLASS. Residues 144–206 form a binding to CDKN1B region; that stretch reads GLASSKACVG…IEQQHGNSGR (63 aa). Ser208 and Ser221 each carry phosphoserine. Copy 3 of the repeat occupies 225–226; sequence FG. At Ser234 the chain carries Phosphoserine. Residues 238–269 are disordered; it reads FHGNKTEDTPDKKMEVASEKKTDPSSLGATSA. Positions 241-260 are enriched in basic and acidic residues; the sequence is NKTEDTPDKKMEVASEKKTD. Phosphothreonine is present on residues Thr246 and Thr259. Phosphoserine is present on Ser270. Repeat unit 4 spans residues 273-274; the sequence is FG. Phosphoserine is present on Ser296. Residues 303-304 form repeat 5; that stretch reads FG. A compositionally biased stretch (polar residues) spans 304–317; the sequence is GKDTTQSKPVSSPF. The interval 304–345 is disordered; sequence GKDTTQSKPVSSPFPTKPLEGQAEGDSGECKGGDEEENDEPP. Residues 335 to 468 enclose the RanBD1 domain; it reads GGDEEENDEP…HKILLEKKDA (134 aa). Lys353 is covalently cross-linked (Glycyl lysine isopeptide (Lys-Gly) (interchain with G-Cter in SUMO2)). Position 450 is an N6-acetyllysine (Lys450).

As to quaternary structure, interacts with Importin alpha-2, Importin beta, Importin beta-2, NUP153, Ran binding protein 7, CDKN1B and itself. Does not interact with TPR. In terms of tissue distribution, ubiquitous. Highest levels in testis, peripheral blood leukocytes and fetal liver.

The protein localises to the nucleus. Its subcellular location is the nuclear pore complex. It localises to the nucleus membrane. In terms of biological role, component of the nuclear pore complex that has a direct role in nuclear protein import. Actively displaces NLSs from importin-alpha, and facilitates disassembly of the importin-alpha:beta-cargo complex and importin recycling. Interacts with regulatory proteins of cell cycle progression including CDKN1B. This interaction is required for correct intracellular transport and degradation of CDKN1B. The chain is Nuclear pore complex protein Nup50 (NUP50) from Homo sapiens (Human).